Reading from the N-terminus, the 172-residue chain is MERAIQGNDAREQANSERWDGGSGSSTSPFQLPDESPSWTEWRLHNDETNSNQDNPLGFKESWGFGKVVFKRYLRYERTETSLHRVLGSWTGDSVNYAASRFFGVNQIGCTYSIRFRGVSVTISGGSRTLQHLCEMAIRSKQELLQLTPVEVESNVSRGCPEGVETFEEESE.

The segment covering 1 to 20 has biased composition (basic and acidic residues); it reads MERAIQGNDAREQANSERWD. Positions 1 to 38 are disordered; that stretch reads MERAIQGNDAREQANSERWDGGSGSSTSPFQLPDESPS.

Belongs to the tombusvirus protein p19 family. In terms of assembly, homodimer.

Its function is as follows. Viral suppressor of RNA silencing which binds specifically to silencing RNAs (siRNAs). Acts as a molecular caliper to specifically select siRNAs based on the length of the duplex region of the RNA. This Tomato bushy stunt virus (strain type) (TBSV) protein is RNA silencing suppressor p19.